The sequence spans 261 residues: LIM and SH3 domain protein 1 (261 aa).

An N-acetylmethionine modification is found at M1. Residues C5–H56 form the LIM zinc-binding domain. N6-acetyllysine is present on K42. Nebulin repeat units follow at residues S61–G95 and G97–M131. T68 bears the Phosphothreonine mark. At K75 the chain carries N6-methyllysine. S99 bears the Phosphoserine mark. Phosphothreonine is present on T104. The interval K111 to Y186 is disordered. K112 carries the N6-succinyllysine modification. Residue S118 is modified to Phosphoserine. Basic and acidic residues predominate over residues K121–R130. Phosphoserine occurs at positions 134 and 146. Over residues S167–Y183 the composition is skewed to low complexity. Residues G202–I261 enclose the SH3 domain.

In terms of assembly, interacts with F-actin. Interacts with ANKRD54. Interacts with KBTBD10.

Its subcellular location is the cytoplasm. It is found in the cell cortex. The protein resides in the cytoskeleton. Plays an important role in the regulation of dynamic actin-based, cytoskeletal activities. Agonist-dependent changes in LASP1 phosphorylation may also serve to regulate actin-associated ion transport activities, not only in the parietal cell but also in certain other F-actin-rich secretory epithelial cell types. In Homo sapiens (Human), this protein is LIM and SH3 domain protein 1 (LASP1).